A 364-amino-acid polypeptide reads, in one-letter code: 3-isopropylmalate dehydrogenase (364 aa).

Residue 78 to 91 (GKKWDYLSIDKRPE) coordinates NAD(+). Substrate is bound by residues R99, R109, R138, and D227. Residues D227, D251, and D255 each contribute to the Mg(2+) site. Residue 285-297 (GSAPDIAGKNIAN) participates in NAD(+) binding.

Belongs to the isocitrate and isopropylmalate dehydrogenases family. LeuB type 1 subfamily. In terms of assembly, homodimer. Requires Mg(2+) as cofactor. It depends on Mn(2+) as a cofactor.

The protein resides in the cytoplasm. The enzyme catalyses (2R,3S)-3-isopropylmalate + NAD(+) = 4-methyl-2-oxopentanoate + CO2 + NADH. The protein operates within amino-acid biosynthesis; L-leucine biosynthesis; L-leucine from 3-methyl-2-oxobutanoate: step 3/4. Catalyzes the oxidation of 3-carboxy-2-hydroxy-4-methylpentanoate (3-isopropylmalate) to 3-carboxy-4-methyl-2-oxopentanoate. The product decarboxylates to 4-methyl-2 oxopentanoate. In Buchnera aphidicola subsp. Uroleucon erigeronensis, this protein is 3-isopropylmalate dehydrogenase.